Reading from the N-terminus, the 416-residue chain is Transcription factor PIL1 (416 aa).

Disordered stretches follow at residues 1–24 (MEAK…NIKP), 89–113 (VSQS…KLKS), and 197–231 (ESTY…KRST). Positions 8–22 (SSSSEPNMISPSSNI) are enriched in low complexity. A coiled-coil region spans residues 95–124 (QQDKETNEQMNNNKKKLKSSKIEFERNVSK). Residues 216–229 (VHARTRKPVTKRKR) are compositionally biased toward basic residues. Residues 229-278 (RSTEVHKLYERKRRDEFNKKMRALQDLLPNCYKDDKASLLDEAIKYMRTL) enclose the bHLH domain.

In terms of assembly, homodimer. Interacts with APRR1/TOC1. Associates to PTAC12/HMR/PAP5 which acts as a transcriptional coactivator. Mainly expressed in stems, fruits and flowers and, to a lower extent, in leaves, seedlings and roots. Accumulates in etiolated seedlings.

The protein localises to the nucleus. Its function is as follows. Transcription factor. Involved in responses to transient and long-term shade. Required for the light-mediated inhibition of hypocotyl elongation. Necessary for rapid light-induced expression of the photomorphogenesis- and circadian-related gene APRR9. Seems to play a role in multiple PHYB responses, such as flowering transition and petiole elongation. This chain is Transcription factor PIL1, found in Arabidopsis thaliana (Mouse-ear cress).